Consider the following 65-residue polypeptide: Large ribosomal subunit protein bL35 (65 aa).

A disordered region spans residues 1–30; that stretch reads MPKMKTNRGAAKRFRKTASGRFKSKQSHLR. The span at 10–30 shows a compositional bias: basic residues; sequence AAKRFRKTASGRFKSKQSHLR.

The protein belongs to the bacterial ribosomal protein bL35 family.

This is Large ribosomal subunit protein bL35 from Pseudoalteromonas atlantica (strain T6c / ATCC BAA-1087).